The sequence spans 655 residues: DNA-directed RNA polymerase III subunit rpc3 (655 aa).

Disordered stretches follow at residues 153 to 183 (VKANGVSEEHGEHEEGEEQSNGLNGEHSNEQ), 270 to 305 (KRKYSSRRADEPNKKPRTDFASVDEIDEQDEEEENE), and 402 to 445 (RLDL…SSGG). Over residues 276 to 287 (RRADEPNKKPRT) the composition is skewed to basic and acidic residues. Over residues 291 to 305 (SVDEIDEQDEEEENE) the composition is skewed to acidic residues. Polar residues predominate over residues 405 to 417 (LSSSTGPMDTSQP). Positions 418–427 (DGRRGKRPLE) are enriched in basic and acidic residues. The interval 582–603 (TYKAMSRCLQRLRFERSRIKDF) is leucine-zipper.

The protein belongs to the RNA polymerase beta chain family. In terms of assembly, component of the RNA polymerase III (Pol III) complex consisting of 17 subunits.

The protein localises to the nucleus. In terms of biological role, DNA-dependent RNA polymerase catalyzes the transcription of DNA into RNA using the four ribonucleoside triphosphates as substrates. Specific core component of RNA polymerase III which synthesizes small RNAs, such as 5S rRNA and tRNAs. In Neosartorya fischeri (strain ATCC 1020 / DSM 3700 / CBS 544.65 / FGSC A1164 / JCM 1740 / NRRL 181 / WB 181) (Aspergillus fischerianus), this protein is DNA-directed RNA polymerase III subunit rpc3 (rpc82).